The chain runs to 266 residues: Thymidylate synthase (266 aa).

Residue arginine 24 coordinates dUMP. A (6R)-5,10-methylene-5,6,7,8-tetrahydrofolate-binding site is contributed by histidine 54. 129–130 (RR) is a binding site for dUMP. Catalysis depends on cysteine 149, which acts as the Nucleophile. DUMP-binding positions include 169–172 (RSAD), asparagine 180, and 210–212 (HIY). Aspartate 172 provides a ligand contact to (6R)-5,10-methylene-5,6,7,8-tetrahydrofolate. Alanine 265 lines the (6R)-5,10-methylene-5,6,7,8-tetrahydrofolate pocket.

Belongs to the thymidylate synthase family. Bacterial-type ThyA subfamily. As to quaternary structure, homodimer.

It is found in the cytoplasm. The enzyme catalyses dUMP + (6R)-5,10-methylene-5,6,7,8-tetrahydrofolate = 7,8-dihydrofolate + dTMP. It participates in pyrimidine metabolism; dTTP biosynthesis. Its function is as follows. Catalyzes the reductive methylation of 2'-deoxyuridine-5'-monophosphate (dUMP) to 2'-deoxythymidine-5'-monophosphate (dTMP) while utilizing 5,10-methylenetetrahydrofolate (mTHF) as the methyl donor and reductant in the reaction, yielding dihydrofolate (DHF) as a by-product. This enzymatic reaction provides an intracellular de novo source of dTMP, an essential precursor for DNA biosynthesis. The chain is Thymidylate synthase from Mycolicibacterium smegmatis (strain ATCC 700084 / mc(2)155) (Mycobacterium smegmatis).